The following is a 394-amino-acid chain: Ribulose bisphosphate carboxylase large chain (394 aa).

Position 5 is an N6,N6,N6-trimethyllysine (lysine 5). Residues asparagine 114 and threonine 164 each contribute to the substrate site. Catalysis depends on lysine 166, which acts as the Proton acceptor. A substrate-binding site is contributed by lysine 168. Mg(2+) contacts are provided by lysine 192, aspartate 194, and glutamate 195. Residue lysine 192 is modified to N6-carboxylysine. Histidine 285 (proton acceptor) is an active-site residue. Substrate-binding residues include arginine 286, histidine 318, and serine 370.

It belongs to the RuBisCO large chain family. Type I subfamily. Heterohexadecamer of 8 large chains and 8 small chains; disulfide-linked. The disulfide link is formed within the large subunit homodimers. The cofactor is Mg(2+). The disulfide bond which can form in the large chain dimeric partners within the hexadecamer appears to be associated with oxidative stress and protein turnover.

The protein localises to the plastid. It localises to the chloroplast. It carries out the reaction 2 (2R)-3-phosphoglycerate + 2 H(+) = D-ribulose 1,5-bisphosphate + CO2 + H2O. It catalyses the reaction D-ribulose 1,5-bisphosphate + O2 = 2-phosphoglycolate + (2R)-3-phosphoglycerate + 2 H(+). Functionally, ruBisCO catalyzes two reactions: the carboxylation of D-ribulose 1,5-bisphosphate, the primary event in carbon dioxide fixation, as well as the oxidative fragmentation of the pentose substrate in the photorespiration process. Both reactions occur simultaneously and in competition at the same active site. The protein is Ribulose bisphosphate carboxylase large chain (rbcL) of Alisma plantago-aquatica (Common water-plantain).